The sequence spans 116 residues: Large ribosomal subunit protein bL17 (116 aa).

Belongs to the bacterial ribosomal protein bL17 family. As to quaternary structure, part of the 50S ribosomal subunit. Contacts protein L32.

The chain is Large ribosomal subunit protein bL17 from Prochlorococcus marinus subsp. pastoris (strain CCMP1986 / NIES-2087 / MED4).